The chain runs to 612 residues: Chaperone protein DnaK (612 aa).

Position 174 is a phosphothreonine; by autocatalysis (Thr174). The tract at residues 579-612 is disordered; sequence GSAGTGAGSQAGSAAGSGDGQSMDAEFKVKDEDK. Residues 581–597 show a composition bias toward gly residues; it reads AGTGAGSQAGSAAGSGD. A compositionally biased stretch (basic and acidic residues) spans 603 to 612; sequence AEFKVKDEDK.

It belongs to the heat shock protein 70 family.

In terms of biological role, acts as a chaperone. This chain is Chaperone protein DnaK, found in Symbiobacterium thermophilum (strain DSM 24528 / JCM 14929 / IAM 14863 / T).